The following is a 153-amino-acid chain: Histone H2B.4 (153 aa).

Basic and acidic residues-rich tracts occupy residues 1–28 (MAPK…EKAP) and 36–53 (EKRL…EGKK). The interval 1-61 (MAPKAEKKPA…KKAGRKKAKK (61 aa)) is disordered. 2 positions are modified to N6-acetyllysine: Lys7 and Lys37. Residue Lys149 forms a Glycyl lysine isopeptide (Lys-Gly) (interchain with G-Cter in ubiquitin) linkage.

The protein belongs to the histone H2B family. The nucleosome is a histone octamer containing two molecules each of H2A, H2B, H3 and H4 assembled in one H3-H4 heterotetramer and two H2A-H2B heterodimers. The octamer wraps approximately 147 bp of DNA. Post-translationally, can be acetylated to form H2BK6ac and H2BK33ac. Monoubiquitinated by BRE1 to form H2BK143ub1 and deubiquitinated by UBP26. Required for heterochromatic histone H3 di- and trimethylation at H3K4me. May give a specific tag for epigenetic transcriptional activation.

It is found in the nucleus. The protein localises to the chromosome. Its function is as follows. Core component of nucleosome. Nucleosomes wrap and compact DNA into chromatin, limiting DNA accessibility to the cellular machineries which require DNA as a template. Histones thereby play a central role in transcription regulation, DNA repair, DNA replication and chromosomal stability. DNA accessibility is regulated via a complex set of post-translational modifications of histones, also called histone code, and nucleosome remodeling. The protein is Histone H2B.4 (H2B.4) of Oryza sativa subsp. indica (Rice).